The primary structure comprises 425 residues: UDP-N-acetylglucosamine 1-carboxyvinyltransferase (425 aa).

Position 24-25 (24-25 (KN)) interacts with phosphoenolpyruvate. Arg95 provides a ligand contact to UDP-N-acetyl-alpha-D-glucosamine. Residue Cys119 is the Proton donor of the active site. Cys119 carries the 2-(S-cysteinyl)pyruvic acid O-phosphothioketal modification. Residues 124–128 (RPVDQ), Asp308, and Val330 each bind UDP-N-acetyl-alpha-D-glucosamine.

The protein belongs to the EPSP synthase family. MurA subfamily.

It localises to the cytoplasm. It catalyses the reaction phosphoenolpyruvate + UDP-N-acetyl-alpha-D-glucosamine = UDP-N-acetyl-3-O-(1-carboxyvinyl)-alpha-D-glucosamine + phosphate. Its pathway is cell wall biogenesis; peptidoglycan biosynthesis. Its function is as follows. Cell wall formation. Adds enolpyruvyl to UDP-N-acetylglucosamine. The sequence is that of UDP-N-acetylglucosamine 1-carboxyvinyltransferase from Deinococcus deserti (strain DSM 17065 / CIP 109153 / LMG 22923 / VCD115).